Consider the following 289-residue polypeptide: uncharacterized protein (289 aa).

A disordered region spans residues 25–66; that stretch reads GGSGDSQSAHTPSTSIHTQNNSTPNKNTSTPPVNVSNANNLE. Residues 33 to 43 show a composition bias toward polar residues; the sequence is AHTPSTSIHTQ. Low complexity predominate over residues 44-59; the sequence is NNSTPNKNTSTPPVNV.

This is an uncharacterized protein from Haemophilus influenzae (strain ATCC 51907 / DSM 11121 / KW20 / Rd).